Consider the following 249-residue polypeptide: 3-deoxy-D-manno-octulosonic acid kinase (249 aa).

Asp175 is a catalytic residue.

The protein belongs to the protein kinase superfamily. KdkA/RfaP family.

It localises to the cell inner membrane. It carries out the reaction an alpha-Kdo-(2-&gt;6)-lipid IVA + ATP = a 4-O-phospho-alpha-Kdo-(2-&gt;6)-lipid IVA + ADP + H(+). It functions in the pathway bacterial outer membrane biogenesis; LPS core biosynthesis. Functionally, catalyzes the ATP-dependent phosphorylation of the 3-deoxy-D-manno-octulosonic acid (Kdo) residue in Kdo-lipid IV(A) at the 4-OH position. The polypeptide is 3-deoxy-D-manno-octulosonic acid kinase (Xylella fastidiosa (strain M23)).